Consider the following 162-residue polypeptide: Beta-lactoglobulin (162 aa).

Intrachain disulfides connect Cys66/Cys160, Cys106/Cys119, and Cys106/Cys121.

Belongs to the calycin superfamily. Lipocalin family. Under physiological conditions beta-lactoglobulin exists as an equilibrium mixture of monomeric and dimeric forms. Post-translationally, alternate disulfide bonds occur in equal amounts.

Its subcellular location is the secreted. In terms of biological role, lactoglobulin is the primary component of whey, it binds retinol and is probably involved in the transport of that molecule. The sequence is that of Beta-lactoglobulin (LGB) from Ovis aries musimon (Mouflon).